Consider the following 290-residue polypeptide: Inactive tau-tubulin kinase ttbk-6 (290 aa).

The Protein kinase domain occupies 1–240 (MEDHVLKKLN…FWQVMENEKI (240 aa)). Disordered stretches follow at residues 244–263 (SKFDWENEEPDMSVPPAAWE) and 268–290 (RYFQSNPLEINGPPTPAEVDFVL).

It belongs to the protein kinase superfamily. CK1 Ser/Thr protein kinase family.

The protein is Inactive tau-tubulin kinase ttbk-6 of Caenorhabditis elegans.